The sequence spans 313 residues: Beta-ketoacyl-[acyl-carrier-protein] synthase III (313 aa).

Residues Cys112 and His238 contribute to the active site. Residues 239–243 (QANIR) form an ACP-binding region. Asn268 is an active-site residue.

This sequence belongs to the thiolase-like superfamily. FabH family. In terms of assembly, homodimer.

It localises to the cytoplasm. It carries out the reaction malonyl-[ACP] + acetyl-CoA + H(+) = 3-oxobutanoyl-[ACP] + CO2 + CoA. It participates in lipid metabolism; fatty acid biosynthesis. Functionally, catalyzes the condensation reaction of fatty acid synthesis by the addition to an acyl acceptor of two carbons from malonyl-ACP. Catalyzes the first condensation reaction which initiates fatty acid synthesis and may therefore play a role in governing the total rate of fatty acid production. Possesses both acetoacetyl-ACP synthase and acetyl transacylase activities. Its substrate specificity determines the biosynthesis of branched-chain and/or straight-chain of fatty acids. The polypeptide is Beta-ketoacyl-[acyl-carrier-protein] synthase III (Staphylococcus epidermidis (strain ATCC 35984 / DSM 28319 / BCRC 17069 / CCUG 31568 / BM 3577 / RP62A)).